We begin with the raw amino-acid sequence, 101 residues long: Small ribosomal subunit protein uS14 (101 aa).

Basic and acidic residues predominate over residues methionine 1–asparagine 10. The disordered stretch occupies residues methionine 1–lysine 23. A compositionally biased stretch (basic residues) spans asparagine 11 to lysine 23.

The protein belongs to the universal ribosomal protein uS14 family. In terms of assembly, part of the 30S ribosomal subunit. Contacts proteins S3 and S10.

Functionally, binds 16S rRNA, required for the assembly of 30S particles and may also be responsible for determining the conformation of the 16S rRNA at the A site. In Rhodopseudomonas palustris (strain TIE-1), this protein is Small ribosomal subunit protein uS14.